A 92-amino-acid chain; its full sequence is Putative pterin-4-alpha-carbinolamine dehydratase (92 aa).

The protein belongs to the pterin-4-alpha-carbinolamine dehydratase family.

It carries out the reaction (4aS,6R)-4a-hydroxy-L-erythro-5,6,7,8-tetrahydrobiopterin = (6R)-L-erythro-6,7-dihydrobiopterin + H2O. This is Putative pterin-4-alpha-carbinolamine dehydratase from Picosynechococcus sp. (strain ATCC 27264 / PCC 7002 / PR-6) (Agmenellum quadruplicatum).